Consider the following 315-residue polypeptide: Acetyl-coenzyme A carboxylase carboxyl transferase subunit alpha (315 aa).

The CoA carboxyltransferase C-terminal domain maps to 32–293 (NISDEIARLQ…RADLVQQLDM (262 aa)).

Belongs to the AccA family. In terms of assembly, acetyl-CoA carboxylase is a heterohexamer composed of biotin carboxyl carrier protein (AccB), biotin carboxylase (AccC) and two subunits each of ACCase subunit alpha (AccA) and ACCase subunit beta (AccD).

The protein localises to the cytoplasm. The enzyme catalyses N(6)-carboxybiotinyl-L-lysyl-[protein] + acetyl-CoA = N(6)-biotinyl-L-lysyl-[protein] + malonyl-CoA. It functions in the pathway lipid metabolism; malonyl-CoA biosynthesis; malonyl-CoA from acetyl-CoA: step 1/1. Component of the acetyl coenzyme A carboxylase (ACC) complex. First, biotin carboxylase catalyzes the carboxylation of biotin on its carrier protein (BCCP) and then the CO(2) group is transferred by the carboxyltransferase to acetyl-CoA to form malonyl-CoA. The polypeptide is Acetyl-coenzyme A carboxylase carboxyl transferase subunit alpha (Pseudomonas putida (strain ATCC 47054 / DSM 6125 / CFBP 8728 / NCIMB 11950 / KT2440)).